A 360-amino-acid chain; its full sequence is Photosystem II protein D1 (360 aa).

The next 3 helical transmembrane spans lie at Y29–S46, H118–F133, and W142–A156. H118 provides a ligand contact to chlorophyll a. Y126 contacts pheophytin a. Residues D170 and E189 each coordinate [CaMn4O5] cluster. A helical membrane pass occupies residues L197–L218. Residue H198 participates in chlorophyll a binding. Residues H215 and S264–F265 each bind a quinone. H215 contacts Fe cation. Fe cation is bound at residue H272. A helical membrane pass occupies residues F274–M288. Residues H332, E333, D342, and A344 each contribute to the [CaMn4O5] cluster site. A propeptide spanning residues S345–G360 is cleaved from the precursor.

The protein belongs to the reaction center PufL/M/PsbA/D family. As to quaternary structure, PSII is composed of 1 copy each of membrane proteins PsbA, PsbB, PsbC, PsbD, PsbE, PsbF, PsbH, PsbI, PsbJ, PsbK, PsbL, PsbM, PsbT, PsbX, PsbY, PsbZ, Psb30/Ycf12, at least 3 peripheral proteins of the oxygen-evolving complex and a large number of cofactors. It forms dimeric complexes. The cofactor is The D1/D2 heterodimer binds P680, chlorophylls that are the primary electron donor of PSII, and subsequent electron acceptors. It shares a non-heme iron and each subunit binds pheophytin, quinone, additional chlorophylls, carotenoids and lipids. D1 provides most of the ligands for the Mn4-Ca-O5 cluster of the oxygen-evolving complex (OEC). There is also a Cl(-1) ion associated with D1 and D2, which is required for oxygen evolution. The PSII complex binds additional chlorophylls, carotenoids and specific lipids.. Tyr-161 forms a radical intermediate that is referred to as redox-active TyrZ, YZ or Y-Z. Post-translationally, C-terminally processed by CTPA; processing is essential to allow assembly of the oxygen-evolving complex and thus photosynthetic growth.

It is found in the plastid. It localises to the chloroplast thylakoid membrane. The catalysed reaction is 2 a plastoquinone + 4 hnu + 2 H2O = 2 a plastoquinol + O2. Its function is as follows. Photosystem II (PSII) is a light-driven water:plastoquinone oxidoreductase that uses light energy to abstract electrons from H(2)O, generating O(2) and a proton gradient subsequently used for ATP formation. It consists of a core antenna complex that captures photons, and an electron transfer chain that converts photonic excitation into a charge separation. The D1/D2 (PsbA/PsbD) reaction center heterodimer binds P680, the primary electron donor of PSII as well as several subsequent electron acceptors. In Antithamnion sp. (Red alga), this protein is Photosystem II protein D1.